A 963-amino-acid chain; its full sequence is Protocadherin alpha-C1 (963 aa).

A signal peptide spans 1–18; it reads MVGWGVAVLCLWVSCGAA. Cadherin domains follow at residues 19-124, 125-233, 234-340, 349-445, and 446-555; these read AGQL…SPLF, PAGD…APVF, ERSV…APEL, VPED…TPSF, and PQPQ…YPVI. At 19–683 the chain is on the extracellular side; sequence AGQLEYSVPE…GGQLSAQNLY (665 aa). N-linked (GlcNAc...) asparagine glycosylation occurs at asparagine 38. N-linked (GlcNAc...) asparagine glycosylation is found at asparagine 248 and asparagine 274. Asparagine 562 carries N-linked (GlcNAc...) asparagine glycosylation. The Cadherin 6 domain maps to 570 to 667; that stretch reads VPRSARTGHL…NSVPQLLPDF (98 aa). Residues 684 to 704 traverse the membrane as a helical segment; that stretch reads LVIALACISFLFLGCLLFFVC. Over 705–963 the chain is Cytoplasmic; it reads TKLHQSPGCC…GNSTTDNSDQ (259 aa). PXXP repeat units lie at residues 812 to 815, 845 to 848, 886 to 889, and 904 to 907; these read PRQP, PGGP, PGNP, and PGSP. Positions 812–907 are 4 X 4 AA repeats of P-X-X-P; sequence PRQPNPDWRY…PDKFIIPGSP (96 aa). The tract at residues 844 to 902 is disordered; it reads GPGGPDQQWPTVSSATPEPEAGEVSPPVGAGVNSNSWTFKYGPGNPKQSGPGELPDKFI. Positions 914 to 963 are disordered; that stretch reads QEPANSQIDKSDFITFGKKEETKKKKKKKKGNKTQEKKEKGNSTTDNSDQ. The segment covering 922 to 936 has biased composition (basic and acidic residues); it reads DKSDFITFGKKEETK.

It is found in the cell membrane. In terms of biological role, potential calcium-dependent cell-adhesion protein. May be involved in the establishment and maintenance of specific neuronal connections in the brain. The chain is Protocadherin alpha-C1 (PCDHAC1) from Pan troglodytes (Chimpanzee).